Reading from the N-terminus, the 203-residue chain is Molybdenum cofactor guanylyltransferase (203 aa).

GTP-binding positions include 20–22 (LAG), K33, N61, D78, and D108. A Mg(2+)-binding site is contributed by D108.

The protein belongs to the MobA family. As to quaternary structure, monomer. The cofactor is Mg(2+).

The protein resides in the cytoplasm. It catalyses the reaction Mo-molybdopterin + GTP + H(+) = Mo-molybdopterin guanine dinucleotide + diphosphate. Functionally, transfers a GMP moiety from GTP to Mo-molybdopterin (Mo-MPT) cofactor (Moco or molybdenum cofactor) to form Mo-molybdopterin guanine dinucleotide (Mo-MGD) cofactor. The sequence is that of Molybdenum cofactor guanylyltransferase from Vibrio cholerae serotype O1 (strain ATCC 39315 / El Tor Inaba N16961).